The following is a 106-amino-acid chain: Nucleoid-associated protein XC_3243 (106 aa).

The interval 82–106 is disordered; the sequence is DAESKERMGSATAGMQLPPGMKLPF.

This sequence belongs to the YbaB/EbfC family. As to quaternary structure, homodimer.

The protein localises to the cytoplasm. Its subcellular location is the nucleoid. In terms of biological role, binds to DNA and alters its conformation. May be involved in regulation of gene expression, nucleoid organization and DNA protection. The polypeptide is Nucleoid-associated protein XC_3243 (Xanthomonas campestris pv. campestris (strain 8004)).